The sequence spans 314 residues: Acetaldehyde dehydrogenase 2 (314 aa).

Position 15–18 (15–18 (SGNI)) interacts with NAD(+). The active-site Acyl-thioester intermediate is Cys-133. Residues 164 to 172 (SAGPGTRQN) and Asn-289 each bind NAD(+).

It belongs to the acetaldehyde dehydrogenase family.

It catalyses the reaction acetaldehyde + NAD(+) + CoA = acetyl-CoA + NADH + H(+). The sequence is that of Acetaldehyde dehydrogenase 2 from Nocardioides sp. (strain ATCC BAA-499 / JS614).